A 336-amino-acid polypeptide reads, in one-letter code: Dihydroorotate dehydrogenase (quinone) (336 aa).

Residues 62–66 (AGLDK) and T86 contribute to the FMN site. K66 contributes to the substrate binding site. Residue 111–115 (NRMGF) participates in substrate binding. Residues N139 and N172 each coordinate FMN. A substrate-binding site is contributed by N172. The Nucleophile role is filled by S175. Substrate is bound at residue N177. FMN is bound by residues K217 and T245. 246-247 (NT) contacts substrate. FMN is bound by residues G268, G297, and 318 to 319 (YS).

It belongs to the dihydroorotate dehydrogenase family. Type 2 subfamily. Monomer. Requires FMN as cofactor.

The protein resides in the cell membrane. It carries out the reaction (S)-dihydroorotate + a quinone = orotate + a quinol. The protein operates within pyrimidine metabolism; UMP biosynthesis via de novo pathway; orotate from (S)-dihydroorotate (quinone route): step 1/1. Functionally, catalyzes the conversion of dihydroorotate to orotate with quinone as electron acceptor. The polypeptide is Dihydroorotate dehydrogenase (quinone) (Yersinia enterocolitica serotype O:8 / biotype 1B (strain NCTC 13174 / 8081)).